Consider the following 574-residue polypeptide: DNA mismatch repair protein MutL (574 aa).

This sequence belongs to the DNA mismatch repair MutL/HexB family.

In terms of biological role, this protein is involved in the repair of mismatches in DNA. It is required for dam-dependent methyl-directed DNA mismatch repair. May act as a 'molecular matchmaker', a protein that promotes the formation of a stable complex between two or more DNA-binding proteins in an ATP-dependent manner without itself being part of a final effector complex. This chain is DNA mismatch repair protein MutL, found in Coxiella burnetii (strain RSA 331 / Henzerling II).